The sequence spans 308 residues: Glutaminase 2 (308 aa).

7 residues coordinate substrate: Ser66, Asn117, Glu161, Asn168, Tyr192, Tyr244, and Val262.

It belongs to the glutaminase family. Homotetramer.

It carries out the reaction L-glutamine + H2O = L-glutamate + NH4(+). The protein is Glutaminase 2 of Shigella flexneri.